Reading from the N-terminus, the 477-residue chain is Angiotensinogen (477 aa).

Positions 1 to 24 are cleaved as a signal peptide; the sequence is MTPTGAGLKATIFCILTWVSLTAG. C42 and C161 form a disulfide bridge. N295 and N319 each carry an N-linked (GlcNAc...) asparagine glycan.

It belongs to the serpin family. In terms of processing, in response to low blood pressure, the enzyme renin/REN cleaves angiotensinogen to produce angiotensin-1. Angiotensin-1 is a substrate of ACE (angiotensin converting enzyme) that removes a dipeptide to yield the physiologically active peptide angiotensin-2. Angiotensin-1 and angiotensin-2 can be further processed to generate angiotensin-3, angiotensin-4. Angiotensin 1-9 is cleaved from angiotensin-1 by ACE2 and can be further processed by ACE to produce angiotensin 1-7, angiotensin 1-5 and angiotensin 1-4. Angiotensin 1-7 has also been proposed to be cleaved from angiotensin-2 by ACE2 or from angiotensin-1 by MME (neprilysin). Post-translationally, the disulfide bond is labile. Angiotensinogen is present in the circulation in a near 40:60 ratio with the oxidized disulfide-bonded form, which preferentially interacts with receptor-bound renin.

Its subcellular location is the secreted. Essential component of the renin-angiotensin system (RAS), a potent regulator of blood pressure, body fluid and electrolyte homeostasis. Functionally, acts directly on vascular smooth muscle as a potent vasoconstrictor, affects cardiac contractility and heart rate through its action on the sympathetic nervous system, and alters renal sodium and water absorption through its ability to stimulate the zona glomerulosa cells of the adrenal cortex to synthesize and secrete aldosterone. Acts by binding to angiotensin receptors AGTR1 and AGTR2. Also binds the DEAR/FBXW7-AS1 receptor. Its function is as follows. Stimulates aldosterone release. In terms of biological role, is a ligand for the G-protein coupled receptor MAS1. Has vasodilator and antidiuretic effects. Has an antithrombotic effect that involves MAS1-mediated release of nitric oxide from platelets. The sequence is that of Angiotensinogen (Agt) from Rattus norvegicus (Rat).